A 929-amino-acid polypeptide reads, in one-letter code: SCY1-like protein 2 (929 aa).

The 296-residue stretch at 32 to 327 (FDVGRHIASG…ADQMTKIPFF (296 aa)) folds into the Protein kinase domain. An HEAT repeat occupies 443–479 (DEIKNSVLPMVYRALEAPSIQIQELCLNIIPTFANLI). Positions 661–701 (ESENKEDGLQNKHKRASLTLEEKQKLAKEQEQAQKLKSQQP) form a coiled coil. Phosphoserine is present on S677. The span at 684–694 (QKLAKEQEQAQ) shows a compositional bias: basic and acidic residues. Disordered stretches follow at residues 684 to 709 (QKLA…VHTP) and 906 to 929 (NFAQ…DLFG). A compositionally biased stretch (low complexity) spans 695-705 (KLKSQQPLKPQ). The necessary for interaction with AP2 complex and clathrin, interaction with clathrin is necessary for its targeting to the TGN and endosomal membranes stretch occupies residues 699 to 929 (QQPLKPQVHT…ASNDLKDLFG (231 aa)). T708 carries the phosphothreonine modification. A compositionally biased stretch (polar residues) spans 912–922 (TTMTNSSSASN).

This sequence belongs to the protein kinase superfamily. As to quaternary structure, interacts with clathrin and AP2B1; the interaction mediates the association with the AP-2 complex. In terms of processing, could autophosphorylate in presence of poly-L-lysine.

The protein localises to the cytoplasmic vesicle. It localises to the clathrin-coated vesicle. It is found in the golgi apparatus. Its subcellular location is the trans-Golgi network membrane. The protein resides in the endosome membrane. In terms of biological role, component of the AP2-containing clathrin coat that may regulate clathrin-dependent trafficking at plasma membrane, TGN and endosomal system. A possible serine/threonine-protein kinase toward the beta2-subunit of the plasma membrane adapter complex AP2 and other proteins in presence of poly-L-lysine has not been confirmed. By regulating the expression of excitatory receptors at synapses, plays an essential role in neuronal function and signaling and in brain development. The polypeptide is SCY1-like protein 2 (Homo sapiens (Human)).